Reading from the N-terminus, the 256-residue chain is Venom allergen-1 (256 aa).

The signal sequence occupies residues 1-21 (MAFNGIALLITATIFIGSCYA). The 147-residue stretch at 65 to 211 (LNTHNKLRAE…MINYYLVCNY (147 aa)) folds into the SCP domain. N-linked (GlcNAc...) asparagine glycosylation is found at asparagine 146 and asparagine 210.

This sequence belongs to the CRISP family.

The protein resides in the secreted. Functionally, activates autophagy in human monocytic cells, dendritic cells and macrophages. (Microbial infection) Promotes Zika virus replication in human dendritic cells and macrophages. Facilitates Zika virus transmission from infected mosquitoes to the host in mouse model. The protein is Venom allergen-1 of Aedes albopictus (Asian tiger mosquito).